Here is a 1299-residue protein sequence, read N- to C-terminus: Nuclear factor related to kappa-B-binding protein (1299 aa).

The 118-residue stretch at 39 to 156 folds into the DEUBAD domain; that stretch reads PEDLLEDPEI…LKQILASRSD (118 aa). Disordered stretches follow at residues 163 to 187 and 204 to 232; these read RSGP…REWR and GDTA…PAVP. Low complexity predominate over residues 216 to 232; that stretch reads SSWLPSSPARSPSPAVP. Phosphoserine is present on residues S228 and S298. A Glycyl lysine isopeptide (Lys-Gly) (interchain with G-Cter in SUMO2) cross-link involves residue K327. Residue S351 is modified to Phosphoserine. Residues 370 to 495 are winged-helix like domain; that stretch reads LGINEISSSF…FCKQENEDSS (126 aa). Residue K469 forms a Glycyl lysine isopeptide (Lys-Gly) (interchain with G-Cter in SUMO2) linkage. A Glycyl lysine isopeptide (Lys-Gly) (interchain with G-Cter in SUMO1); alternate cross-link involves residue K488. K488 is covalently cross-linked (Glycyl lysine isopeptide (Lys-Gly) (interchain with G-Cter in SUMO2); alternate). 3 disordered regions span residues 669 to 760, 882 to 902, and 1017 to 1043; these read AAKA…SSSG, LPAT…TSAP, and VHAA…TVVK. 3 stretches are compositionally biased toward low complexity: residues 677 to 688, 695 to 715, and 723 to 733; these read QQKPKPPSKVKS, IKVL…DSSM, and VTPTTPALPAI. The segment covering 744–760 has biased composition (polar residues); that stretch reads NKSGPSTVSEPAKSSSG. Composition is skewed to low complexity over residues 892–902 and 1019–1043; these read PATSSPGTSAP and AADS…TVVK. Position 1022 is a phosphoserine (S1022). N6-acetyllysine is present on K1237. Position 1291 is a phosphoserine (S1291).

It belongs to the NFRKB family. Component of the chromatin remodeling INO80 complex; specifically part of a complex module associated with the N-terminus of INO80. Interacts with UCHL5; NFRKB competes with ADRM1 for interaction with UCHL5. Expressed in thymus, brain, testes, spleen and liver.

Its subcellular location is the nucleus. Its function is as follows. Binds to the DNA consensus sequence 5'-GGGGAATCTCC-3'. Putative regulatory component of the chromatin remodeling INO80 complex which is involved in transcriptional regulation, DNA replication and probably DNA repair. Modulates the deubiquitinase activity of UCHL5 in the INO80 complex. The protein is Nuclear factor related to kappa-B-binding protein (NFRKB) of Homo sapiens (Human).